We begin with the raw amino-acid sequence, 235 residues long: Glycerol-3-phosphate acyltransferase (235 aa).

6 helical membrane-spanning segments follow: residues 4 to 24 (LIAI…IMAG), 56 to 76 (AVTL…VAFF), 94 to 114 (LLAG…GFKG), 122 to 142 (AGML…IFLL), 152 to 172 (VASI…KYIF), and 191 to 211 (FHDS…LAIL).

Belongs to the PlsY family. As to quaternary structure, probably interacts with PlsX.

It is found in the cell inner membrane. It catalyses the reaction an acyl phosphate + sn-glycerol 3-phosphate = a 1-acyl-sn-glycero-3-phosphate + phosphate. It participates in lipid metabolism; phospholipid metabolism. Its function is as follows. Catalyzes the transfer of an acyl group from acyl-phosphate (acyl-PO(4)) to glycerol-3-phosphate (G3P) to form lysophosphatidic acid (LPA). This enzyme utilizes acyl-phosphate as fatty acyl donor, but not acyl-CoA or acyl-ACP. This chain is Glycerol-3-phosphate acyltransferase, found in Chlorobium phaeobacteroides (strain DSM 266 / SMG 266 / 2430).